The sequence spans 623 residues: Cilia- and flagella-associated protein 52 (623 aa).

WD repeat units follow at residues 65–109 (GHGN…LMAR), 112–153 (LHKG…AICG), 159–198 (LNVG…RKIW), 291–330 (QLQG…ETLI), 333–372 (CHFE…ELLR), 375–414 (VPNM…LMYV), 418–457 (AHRI…QKLE), 462–501 (EHKS…RNQM), 503–544 (LANT…RELD), 546–585 (SLSG…VTHV), and 588–623 (GHSG…PFPS).

It belongs to the CFAP52 family. Microtubule inner protein component of sperm flagellar doublet microtubules. Interacts with BRCA2. Interacts with the CCT chaperonin complex. Interacts with HSP70. Interacts with AK8. Interacts with CFAP45. Interacts with DNAI1. Interacts with IQDC. Expressed in trachea multiciliated cells.

It localises to the cytoplasm. The protein localises to the cytoskeleton. It is found in the cilium axoneme. Its subcellular location is the flagellum axoneme. Functionally, microtubule inner protein (MIP) part of the dynein-decorated doublet microtubules (DMTs) in cilia axoneme. Important for proper ciliary and flagellar beating. May act in cooperation with CFAP45 and axonemal dynein subunit DNAH11. May play a role in cell growth and/or survival. The chain is Cilia- and flagella-associated protein 52 (CFAP52) from Bos taurus (Bovine).